A 210-amino-acid chain; its full sequence is Large ribosomal subunit protein uL4 (210 aa).

The interval 49 to 76 (HCTKTRSEVSGGGKKPWRQKHTGRARHG) is disordered. A compositionally biased stretch (basic residues) spans 63–76 (KPWRQKHTGRARHG).

The protein belongs to the universal ribosomal protein uL4 family. Part of the 50S ribosomal subunit.

Its function is as follows. One of the primary rRNA binding proteins, this protein initially binds near the 5'-end of the 23S rRNA. It is important during the early stages of 50S assembly. It makes multiple contacts with different domains of the 23S rRNA in the assembled 50S subunit and ribosome. In terms of biological role, forms part of the polypeptide exit tunnel. The chain is Large ribosomal subunit protein uL4 from Thermodesulfovibrio yellowstonii (strain ATCC 51303 / DSM 11347 / YP87).